A 231-amino-acid chain; its full sequence is Probable glutathione S-transferase GSTU1 (231 aa).

The 80-residue stretch at 5-84 folds into the GST N-terminal domain; sequence KELVLLDFWV…YLDDAFPGTP (80 aa). Residues Ser-15, Lys-42, Ile-56, and 68–69 each bind glutathione; that span reads ES. Positions 97–220 constitute a GST C-terminal domain; that stretch reads AAYARATARF…LPSPEKVYDF (124 aa).

This sequence belongs to the GST superfamily. Tau family.

It catalyses the reaction RX + glutathione = an S-substituted glutathione + a halide anion + H(+). In terms of biological role, conjugation of reduced glutathione to a wide number of exogenous and endogenous hydrophobic electrophiles. The sequence is that of Probable glutathione S-transferase GSTU1 (GSTU1) from Oryza sativa subsp. indica (Rice).